We begin with the raw amino-acid sequence, 201 residues long: 3-isopropylmalate dehydratase small subunit (201 aa).

This sequence belongs to the LeuD family. LeuD type 1 subfamily. In terms of assembly, heterodimer of LeuC and LeuD.

It catalyses the reaction (2R,3S)-3-isopropylmalate = (2S)-2-isopropylmalate. Its pathway is amino-acid biosynthesis; L-leucine biosynthesis; L-leucine from 3-methyl-2-oxobutanoate: step 2/4. In terms of biological role, catalyzes the isomerization between 2-isopropylmalate and 3-isopropylmalate, via the formation of 2-isopropylmaleate. The sequence is that of 3-isopropylmalate dehydratase small subunit from Shewanella oneidensis (strain ATCC 700550 / JCM 31522 / CIP 106686 / LMG 19005 / NCIMB 14063 / MR-1).